Reading from the N-terminus, the 305-residue chain is uncharacterized protein (305 aa).

An N-terminal signal peptide occupies residues 1 to 29 (MKKWFSSISKKKVSFSTLLLLGSGIVLSS). Cys30 is lipidated: N-palmitoyl cysteine. Residue Cys30 is the site of S-diacylglycerol cysteine attachment. The interval 234 to 265 (FYNPDNSNGSNAPGSNQPNQDSGNNGSTTPAA) is disordered. Polar residues predominate over residues 237-258 (PDNSNGSNAPGSNQPNQDSGNN).

It localises to the cell membrane. This is an uncharacterized protein from Mycoplasma pneumoniae (strain ATCC 29342 / M129 / Subtype 1) (Mycoplasmoides pneumoniae).